Reading from the N-terminus, the 314-residue chain is MSKKRYPRLFGILPFLGMLLLSGCNWTLLDPKGQVGIEQKNLILIATGLMLLVVIPVIIMTVVFAWKYRASNKAATYTPDWSHSTKIEAAVWIIPILIIIALGYFTYHSTHKLDPYRPLDSDVKPVQIDVVALDWKWLFIYPEQGIATVNKIVFPANTPVNFRVTSDAVMNSFFIPGLGGQIYAMAGMTTKLHLIANENGEFDGISANYSGAGFTGMKFKATATSQEDFDKWVAEVKQSPKKLDKAEYEALAKPSENNPVALYSEASPDQFQLIVDKYEGMNRGRPSHEEAGSKDLATTKGVESSMQPAAGAEE.

The first 23 residues, 1–23 (MSKKRYPRLFGILPFLGMLLLSG), serve as a signal peptide directing secretion. Cys24 carries the N-palmitoyl cysteine lipid modification. Cys24 carries S-diacylglycerol cysteine lipidation. Residues 24 to 42 (CNWTLLDPKGQVGIEQKNL) are Periplasmic-facing. The chain crosses the membrane as a helical span at residues 43-63 (ILIATGLMLLVVIPVIIMTVV). Residues 64 to 86 (FAWKYRASNKAATYTPDWSHSTK) are Cytoplasmic-facing. A helical transmembrane segment spans residues 87 to 107 (IEAAVWIIPILIIIALGYFTY). Over 108-314 (HSTHKLDPYR…SMQPAAGAEE (207 aa)) the chain is Periplasmic. Residues 278–293 (YEGMNRGRPSHEEAGS) are compositionally biased toward basic and acidic residues. Residues 278–314 (YEGMNRGRPSHEEAGSKDLATTKGVESSMQPAAGAEE) are disordered.

The protein belongs to the cytochrome c oxidase subunit 2 family. Heterooctamer of two A chains, two B chains, two C chains and two D chains.

The protein resides in the cell inner membrane. Functionally, cytochrome bo(3) ubiquinol terminal oxidase is the component of the aerobic respiratory chain of E.coli that predominates when cells are grown at high aeration. Has proton pump activity across the membrane in addition to electron transfer, pumping 2 protons/electron. This chain is Cytochrome bo(3) ubiquinol oxidase subunit 2 (cyoA), found in Pseudomonas putida (Arthrobacter siderocapsulatus).